Here is a 340-residue protein sequence, read N- to C-terminus: Arginase 1, mitochondrial (340 aa).

The transit peptide at 1-24 (MGGVAAGTRWIHHVRRLSAAKVST) directs the protein to the mitochondrion. Residues His159, Asp183, His185, and Asp187 each coordinate Mn(2+). Substrate contacts are provided by residues 185–189 (HPDIY) and 193–195 (EGN). Mn(2+) contacts are provided by Asp268 and Asp270. Glu311 contributes to the substrate binding site.

Belongs to the arginase family. Requires Mn(2+) as cofactor.

It localises to the mitochondrion. It carries out the reaction L-arginine + H2O = urea + L-ornithine. It functions in the pathway nitrogen metabolism; urea cycle; L-ornithine and urea from L-arginine: step 1/1. Its function is as follows. Catalyzes the hydrolysis of L-arginine to urea and L-ornithine. The latter can be utilized in the urea cycle or as a precursor for the synthesis of both polyamines and proline. The chain is Arginase 1, mitochondrial from Oryza sativa subsp. indica (Rice).